Here is a 407-residue protein sequence, read N- to C-terminus: Negative RAS protein regulator protein (407 aa).

Disordered stretches follow at residues 51-94 (PRII…ARQI), 165-187 (HPSKKSKQKKKKSKQEAGSNLNF), and 241-273 (NNNNNNINNSNNSNNNNSNNINRNSNHSTNVFS). Residues 55–73 (SSSNSNSNSNSNSNSNSNS) are compositionally biased toward low complexity. Positions 90 to 158 (SARQIRKKWK…QCHDRFKVLY (69 aa)) constitute a Myb-like domain. The span at 165–177 (HPSKKSKQKKKKS) shows a compositional bias: basic residues. Residues 241–270 (NNNNNNINNSNNSNNNNSNNINRNSNHSTN) are compositionally biased toward low complexity.

Its subcellular location is the nucleus. In terms of biological role, negative regulator of the Ras-cyclic AMP pathway. Negatively regulate the activity of normal but not mutationally activated Ras proteins. The down-regulatory effect of RPI1 requires the presence of one of the two Ras GTPase activators, IRA1 and IRA2. This is Negative RAS protein regulator protein (RPI1) from Saccharomyces cerevisiae (strain ATCC 204508 / S288c) (Baker's yeast).